The sequence spans 244 residues: MTHKTDAIYAAPLQKMIDFQFDERVVAVFPDMIQRSVPGYGMIISNIGIVAAKYAQAGSHCYDLGCSLGAVSLAMRQRITQPDCDIIAVDNSPAMIARGRELLALDTAPTVPVTMICADLQEVAIENASVVVLNFTLQFIPPAERLALLERIHAGLRPGGVLILSEKIAFGEPGRQQFHEELHHDFKRANGYSDLEISQKRSALEKVLIPETLACHHERLQAAGFSFSELWFQCFNFASLVAMK.

Residues Tyr40, 65–67 (GCS), 90–91 (DN), 119–120 (DL), Asn134, and Arg201 contribute to the S-adenosyl-L-methionine site.

This sequence belongs to the class I-like SAM-binding methyltransferase superfamily. Cx-SAM synthase family. As to quaternary structure, homodimer.

It catalyses the reaction prephenate + S-adenosyl-L-methionine = carboxy-S-adenosyl-L-methionine + 3-phenylpyruvate + H2O. In terms of biological role, catalyzes the conversion of S-adenosyl-L-methionine (SAM) to carboxy-S-adenosyl-L-methionine (Cx-SAM). This Geobacter metallireducens (strain ATCC 53774 / DSM 7210 / GS-15) protein is Carboxy-S-adenosyl-L-methionine synthase.